A 402-amino-acid chain; its full sequence is Plasminogen activator inhibitor 1 (402 aa).

A signal peptide spans 1–22 (MQMSSALACLILGLVLVSGKGF). N-linked (GlcNAc...) asparagine glycosylation is found at Asn232, Asn288, and Asn352.

Belongs to the serpin family. Forms a heterodimer with TMPRSS7. Interacts with VTN. Binds LRP1B; binding is followed by internalization and degradation. Interacts with PPP1CB. In complex with PLAU/uPA, interacts with PLAUR/uPAR. Interacts with SORL1 and LRP1, either alone or in complex with PLAU; these interactions are abolished in the presence of LRPAP1/RAP. The ternary complex composed of PLAUR-PLAU-PAI1 also interacts with SORL1. Interacts with PLAT/tPA. Also interacts with SORL1, when complexed to PLAT/tPA.

Its subcellular location is the secreted. Its function is as follows. Serine protease inhibitor. Inhibits TMPRSS7. Is a primary inhibitor of tissue-type plasminogen activator (PLAT) and urokinase-type plasminogen activator (PLAU). As PLAT inhibitor, it is required for fibrinolysis down-regulation and is responsible for the controlled degradation of blood clots. As PLAU inhibitor, it is involved in the regulation of cell adhesion and spreading. Acts as a regulator of cell migration, independently of its role as protease inhibitor. It is required for stimulation of keratinocyte migration during cutaneous injury repair. Involved in cellular and replicative senescence. Plays a role in alveolar type 2 cells senescence in the lung. Is involved in the regulation of cementogenic differentiation of periodontal ligament stem cells, and regulates odontoblast differentiation and dentin formation during odontogenesis. This is Plasminogen activator inhibitor 1 (Serpine1) from Mus musculus (Mouse).